The chain runs to 347 residues: Ubiquitin thioesterase Otu1 (347 aa).

Positions 5 to 87 (FSVKLKSKKG…LIVEEKAAPA (83 aa)) constitute a Ubiquitin-like domain. Positions 8 to 89 (KLKSKKGQFI…VEEKAAPAPA (82 aa)) are UBX-like. The OTU domain occupies 150-274 (LLKKVVPADN…GIHYDPLYME (125 aa)). Positions 155–161 (VPADNSC) are cys-loop. Asp158 is a catalytic residue. Cys161 serves as the catalytic Nucleophile. The variable-loop stretch occupies residues 213-223 (IQKADSWGGAI). A his-loop region spans residues 263-267 (FDGIH). Ile266 is a binding site for substrate. His267 is a catalytic residue. The tract at residues 290–295 (LGVYQQ) is S2 site. Residues 317–341 (LRCMQCDVRLVGQVQAQEHAKQTGH) form a C2H2-type zinc finger. The active site involves His341.

It catalyses the reaction Thiol-dependent hydrolysis of ester, thioester, amide, peptide and isopeptide bonds formed by the C-terminal Gly of ubiquitin (a 76-residue protein attached to proteins as an intracellular targeting signal).. Functionally, hydrolase that can remove conjugated ubiquitin from proteins and may therefore play an important regulatory role at the level of protein turnover by preventing degradation. Involved in the regulation of DNA damage repair. This Drosophila melanogaster (Fruit fly) protein is Ubiquitin thioesterase Otu1.